Here is a 57-residue protein sequence, read N- to C-terminus: MAGTSGLLNAVKPKIQTIDIQAAAGWGIAAAAGAIWVVQPFGWIKKTFIDPPPTEEK.

The Mitochondrial matrix portion of the chain corresponds to 1–23 (MAGTSGLLNAVKPKIQTIDIQAA). A helical transmembrane segment spans residues 24–44 (AGWGIAAAAGAIWVVQPFGWI). Residues 45–57 (KKTFIDPPPTEEK) are Mitochondrial intermembrane-facing.

This sequence belongs to the UQCR11/QCR10 family. Component of the ubiquinol-cytochrome c oxidoreductase (cytochrome b-c1 complex, complex III, CIII), a multisubunit enzyme composed of 10 subunits. The complex is composed of 3 respiratory subunits cytochrome b (MT-CYB), cytochrome c1 (CYC1-1 or CYC1-2) and Rieske protein (UCR1-1 or UCR1-2), 2 core protein subunits MPPalpha1 (or MPPalpha2) and MPPB, and 5 low-molecular weight protein subunits QCR7-1 (or QCR7-2), UCRQ-1 (or UCRQ-2), QCR9, UCRY and probably QCR6-1 (or QCR6-2). The complex exists as an obligatory dimer and forms supercomplexes (SCs) in the inner mitochondrial membrane with NADH-ubiquinone oxidoreductase (complex I, CI), resulting in different assemblies (supercomplexes SCI(1)III(2) and SCI(2)III(4)).

The protein resides in the mitochondrion inner membrane. Component of the ubiquinol-cytochrome c oxidoreductase, a multisubunit transmembrane complex that is part of the mitochondrial electron transport chain which drives oxidative phosphorylation. The respiratory chain contains 3 multisubunit complexes succinate dehydrogenase (complex II, CII), ubiquinol-cytochrome c oxidoreductase (cytochrome b-c1 complex, complex III, CIII) and cytochrome c oxidase (complex IV, CIV), that cooperate to transfer electrons derived from NADH and succinate to molecular oxygen, creating an electrochemical gradient over the inner membrane that drives transmembrane transport and the ATP synthase. The cytochrome b-c1 complex catalyzes electron transfer from ubiquinol to cytochrome c, linking this redox reaction to translocation of protons across the mitochondrial inner membrane, with protons being carried across the membrane as hydrogens on the quinol. In the process called Q cycle, 2 protons are consumed from the matrix, 4 protons are released into the intermembrane space and 2 electrons are passed to cytochrome c. The chain is Cytochrome b-c1 complex subunit 10, mitochondrial (UCRY) from Arabidopsis thaliana (Mouse-ear cress).